The sequence spans 460 residues: Sorting nexin-4 (460 aa).

Residues Met-1–Trp-16 show a composition bias toward polar residues. The disordered stretch occupies residues Met-1–Gly-53. Residues Lys-56–Ala-178 enclose the PX domain. 3 coiled-coil regions span residues Glu-238–Ile-266, Arg-306–Asn-337, and Gln-374–Met-403.

This sequence belongs to the sorting nexin family. In terms of assembly, forms a complex with ATG20 and ATG17.

It is found in the cytoplasm. It localises to the membrane. The protein resides in the endosome membrane. Its function is as follows. Sorting nexin involved in the separation or division of vacuoles throughout the entire life cycle of the cells. Involved in retrieval of late-Golgi SNAREs from post-Golgi endosomes to the trans-Golgi network, for cytoplasm to vacuole transport (Cvt), and autophagy of large cargos including mitophagy, pexophagy and glycophagy. Autophagy is required for proper vegetative growth, asexual/sexual reproduction, and full virulence. Autophagy is particularly involved in the biosynthesis of deoxynivalenol (DON), an important virulence determinant. The protein is Sorting nexin-4 of Gibberella zeae (strain ATCC MYA-4620 / CBS 123657 / FGSC 9075 / NRRL 31084 / PH-1) (Wheat head blight fungus).